The following is a 109-amino-acid chain: Ribonuclease P protein component (109 aa).

It belongs to the RnpA family. As to quaternary structure, consists of a catalytic RNA component (M1 or rnpB) and a protein subunit.

It catalyses the reaction Endonucleolytic cleavage of RNA, removing 5'-extranucleotides from tRNA precursor.. RNaseP catalyzes the removal of the 5'-leader sequence from pre-tRNA to produce the mature 5'-terminus. It can also cleave other RNA substrates such as 4.5S RNA. The protein component plays an auxiliary but essential role in vivo by binding to the 5'-leader sequence and broadening the substrate specificity of the ribozyme. This is Ribonuclease P protein component from Mycoplasma capricolum subsp. capricolum (strain California kid / ATCC 27343 / NCTC 10154).